A 101-amino-acid chain; its full sequence is uncharacterized protein (101 aa).

The tract at residues 76 to 101 (KGNVTRRRKKTHLGNDDGKKEAQEKM) is disordered. The segment covering 88–101 (LGNDDGKKEAQEKM) has biased composition (basic and acidic residues).

This is an uncharacterized protein from Homo sapiens (Human).